The chain runs to 127 residues: Aspartate 1-decarboxylase (127 aa).

Serine 25 serves as the catalytic Schiff-base intermediate with substrate; via pyruvic acid. The residue at position 25 (serine 25) is a Pyruvic acid (Ser). Threonine 57 is a substrate binding site. The active-site Proton donor is the tyrosine 58. Position 73–75 (73–75 (GSA)) interacts with substrate.

The protein belongs to the PanD family. As to quaternary structure, heterooctamer of four alpha and four beta subunits. The cofactor is pyruvate. In terms of processing, is synthesized initially as an inactive proenzyme, which is activated by self-cleavage at a specific serine bond to produce a beta-subunit with a hydroxyl group at its C-terminus and an alpha-subunit with a pyruvoyl group at its N-terminus.

Its subcellular location is the cytoplasm. The catalysed reaction is L-aspartate + H(+) = beta-alanine + CO2. Its pathway is cofactor biosynthesis; (R)-pantothenate biosynthesis; beta-alanine from L-aspartate: step 1/1. Its function is as follows. Catalyzes the pyruvoyl-dependent decarboxylation of aspartate to produce beta-alanine. The sequence is that of Aspartate 1-decarboxylase from Dechloromonas aromatica (strain RCB).